The sequence spans 309 residues: Neuropeptide-like 1 (309 aa).

Residues 1–28 (MQAVLQSAHSSRRLMLLLSMLLNAAIQP) form the signal peptide. The propeptide occupies 29–99 (RSIIVSATDD…GEYPDYLEED (71 aa)). The tract at residues 126-147 (GQLPTAEPGEDYGDADSGEPSE) is disordered. The span at 133–144 (PGEDYGDADSGE) shows a compositional bias: acidic residues. At Tyr-164 the chain carries Tyrosine amide. Asparagine amide is present on Asn-182.

In terms of tissue distribution, MTYamide peptide: Expressed in the larval CNS (at protein level). NAP peptide: Expressed in the larval CNS (at protein level). IPNamide peptide: Expressed in the ventral ganglion of the third larval instar and adult brain (at protein level).

It localises to the secreted. Functionally, acts as a ligand for the receptor-type guanylate cyclase Gyc76C. Stimulates Gyc76c-dependent cGMP production and modulates the IMD innate immune pathway in response to salt stress by inducing nuclear translocation of NF-kappa-B protein Rel which leads to increased expression of the antimicrobial peptide diptericin. Does not appear to play a role in Gyc76C-mediated wing development. The chain is Neuropeptide-like 1 (Nplp1) from Drosophila melanogaster (Fruit fly).